Consider the following 458-residue polypeptide: MVCESNNKSYLKSQNLKIIGKNSLRGNVKISGAKNSALVLLAASLLTDEKIILDNVPLLTDIEKMGNILKNLGVKLHNKDHQLIIDSKNISIQELPYELVNGLRASFFCIGALLTRFGKASLPLPGGCNIGERPINEHINGLRALGAEIIIEKEVVKAKLIKKKSKLFGANIRLNCPSVGATETLIMAASLAEGRTIIENAAREPEIQDLCQMLNKMGAKIYGAGKEKIIIDGVQKLHGCSHKVIPDRIEAGTFLIAAAATSSSITISPVIPNHLEAVLNKLEESGSKIEKKGNSISISGKSIKAVKIKTAPFPGFPTDLQAPFMALMTIAKGTSMISERIFENRMHHVNLLNQMGAAITVDDNTAIINGVKKLKGMNLVGSDLRSSAALIIAALISENISHIYGLEHLDRGYENFEFKLTKLGAKIIREVDGGIQTKSKNSSEIHPTKNLDINFNVA.

Residue 34 to 35 (KN) coordinates phosphoenolpyruvate. Residue arginine 104 coordinates UDP-N-acetyl-alpha-D-glucosamine. The Proton donor role is filled by cysteine 128. A 2-(S-cysteinyl)pyruvic acid O-phosphothioketal modification is found at cysteine 128. Residues aspartate 319 and isoleucine 341 each coordinate UDP-N-acetyl-alpha-D-glucosamine.

Belongs to the EPSP synthase family. MurA subfamily.

The protein resides in the cytoplasm. It carries out the reaction phosphoenolpyruvate + UDP-N-acetyl-alpha-D-glucosamine = UDP-N-acetyl-3-O-(1-carboxyvinyl)-alpha-D-glucosamine + phosphate. Its pathway is cell wall biogenesis; peptidoglycan biosynthesis. Its function is as follows. Cell wall formation. Adds enolpyruvyl to UDP-N-acetylglucosamine. The protein is UDP-N-acetylglucosamine 1-carboxyvinyltransferase of Prochlorococcus marinus (strain MIT 9515).